The sequence spans 297 residues: Urease accessory protein UreD (297 aa).

Belongs to the UreD family. In terms of assembly, ureD, UreF and UreG form a complex that acts as a GTP-hydrolysis-dependent molecular chaperone, activating the urease apoprotein by helping to assemble the nickel containing metallocenter of UreC. The UreE protein probably delivers the nickel.

Its subcellular location is the cytoplasm. Required for maturation of urease via the functional incorporation of the urease nickel metallocenter. The sequence is that of Urease accessory protein UreD from Prochlorococcus marinus subsp. pastoris (strain CCMP1986 / NIES-2087 / MED4).